The following is a 204-amino-acid chain: 3-isopropylmalate dehydratase small subunit (204 aa).

Belongs to the LeuD family. LeuD type 1 subfamily. Heterodimer of LeuC and LeuD.

It carries out the reaction (2R,3S)-3-isopropylmalate = (2S)-2-isopropylmalate. Its pathway is amino-acid biosynthesis; L-leucine biosynthesis; L-leucine from 3-methyl-2-oxobutanoate: step 2/4. Its function is as follows. Catalyzes the isomerization between 2-isopropylmalate and 3-isopropylmalate, via the formation of 2-isopropylmaleate. The chain is 3-isopropylmalate dehydratase small subunit from Clavibacter michiganensis subsp. michiganensis (strain NCPPB 382).